Here is a 194-residue protein sequence, read N- to C-terminus: Cysteine and glycine-rich protein 3 (194 aa).

The interval 1–5 is interaction with TCAP; it reads MPNWG. The region spanning 10–61 is the LIM zinc-binding 1 domain; sequence CGACEKTVYHAEEIQCNGRSFHKTCFHCMACRKALDSTTVAAHESEIYCKVC. The Nuclear localization signal signature appears at 64 to 69; it reads RRYGPK. The segment at 94 to 106 is interaction with CLF2; sequence QSPKQARSATTSS. Ser95 and Ser153 each carry phosphoserine. One can recognise an LIM zinc-binding 2 domain in the interval 120-171; it reads CPRCGKSVYAAEKVMGGGKPWHKTCFRCAICGKSLESTNVTDKDGELYCKVC.

Self-associates. Oligomeric in the cytoplasm and monomeric in the nucleus. Homooligomers preferentially form along the actin cytoskeleton. Interacts with TCAP, LDHD, MYOD1, MYOG, ACTN2, NRAP, MYF6. Interacts (via N-terminus) with GLRX3 (via C-terminus) and PPP3CA; GLRX3 and calcineurin compete for interaction with CSRP3. Interacts with CFL2; the stoichiometry influences F-actin depolymerization and possibly two molecules of CFL2 can interact with one molecule of CSRP3 resulting in the highest functional impact; the interaction is stronger with phosphorylated CFL2.

The protein resides in the nucleus. The protein localises to the cytoplasm. It is found in the cytoskeleton. Its subcellular location is the myofibril. It localises to the sarcomere. The protein resides in the z line. Functionally, positive regulator of myogenesis. Acts as a cofactor for myogenic bHLH transcription factors such as MYOD1, and probably MYOG and MYF6. Enhances the DNA-binding activity of the MYOD1:TCF3 isoform E47 complex and may promote formation of a functional MYOD1:TCF3 isoform E47:MEF2A complex involved in myogenesis. Plays a crucial and specific role in the organization of cytosolic structures in cardiomyocytes. Could play a role in mechanical stretch sensing. May be a scaffold protein that promotes the assembly of interacting proteins at Z-line structures. It is essential for calcineurin anchorage to the Z line. Required for stress-induced calcineurin-NFAT activation. The role in regulation of cytoskeleton dynamics by association with CFL2 is reported conflictingly. Proposed to contribute to the maintenance of muscle cell integrity through an actin-based mechanism. Can directly bind to actin filaments, cross-link actin filaments into bundles without polarity selectivity and protect them from dilution- and cofilin-mediated depolymerization; the function seems to involve its self-association. In vitro can inhibit PKC/PRKCA activity. Proposed to be involved in cardiac stress signaling by down-regulating excessive PKC/PRKCA signaling. This Bos taurus (Bovine) protein is Cysteine and glycine-rich protein 3 (CSRP3).